The chain runs to 704 residues: Ubiquitin-like modifier-activating enzyme atg7 (704 aa).

Residues 372–377 (GAGTLG) carry the GXGXXG motif motif. The active-site Glycyl thioester intermediate is the Cys555. The tract at residues 660-699 (ALTEKDYITELSGLAEVQRKAEAAANDVEWDSDEEGMEDE) is homodimerization. Residues 682 to 704 (AAANDVEWDSDEEGMEDEEPELL) form a disordered region. A compositionally biased stretch (acidic residues) spans 687-704 (VEWDSDEEGMEDEEPELL).

It belongs to the ATG7 family. In terms of assembly, homodimer. Interacts with ATG8 through a thioester bond between Cys-555 and the C-terminal Gly of ATG8 and with ATG12 through a thioester bond between Cys-555 and the C-terminal Gly of ATG12. Also interacts with ATG3.

The protein localises to the cytoplasm. It is found in the preautophagosomal structure. Its function is as follows. E1-like activating enzyme involved in the 2 ubiquitin-like systems required for cytoplasm to vacuole transport (Cvt) and autophagy. Activates ATG12 for its conjugation with ATG5 and ATG8 for its conjugation with phosphatidylethanolamine. Both systems are needed for the ATG8 association to Cvt vesicles and autophagosomes membranes. Autophagy is essential for maintenance of amino acid levels and protein synthesis under nitrogen starvation. Required for selective autophagic degradation of the nucleus (nucleophagy) as well as for mitophagy which contributes to regulate mitochondrial quantity and quality by eliminating the mitochondria to a basal level to fulfill cellular energy requirements and preventing excess ROS production. Required for normal mycelial growth and conidiogenesis, and regulates sclerotial formation. Plays an essential role in pathogenesis. The chain is Ubiquitin-like modifier-activating enzyme atg7 from Botryotinia fuckeliana (strain T4) (Noble rot fungus).